Here is a 312-residue protein sequence, read N- to C-terminus: Glyoxylate/hydroxypyruvate reductase A (312 aa).

Residue Arg-227 is part of the active site. The Proton donor role is filled by His-275.

It belongs to the D-isomer specific 2-hydroxyacid dehydrogenase family. GhrA subfamily.

It is found in the cytoplasm. The enzyme catalyses glycolate + NADP(+) = glyoxylate + NADPH + H(+). The catalysed reaction is (R)-glycerate + NAD(+) = 3-hydroxypyruvate + NADH + H(+). It catalyses the reaction (R)-glycerate + NADP(+) = 3-hydroxypyruvate + NADPH + H(+). Its function is as follows. Catalyzes the NADPH-dependent reduction of glyoxylate and hydroxypyruvate into glycolate and glycerate, respectively. This chain is Glyoxylate/hydroxypyruvate reductase A, found in Escherichia coli (strain SMS-3-5 / SECEC).